A 332-amino-acid polypeptide reads, in one-letter code: Fructose-1,6-bisphosphatase class 1 (332 aa).

Positions 92, 113, 115, and 116 each coordinate Mg(2+). Residues 116 to 119, Asn209, Tyr242, and Lys272 contribute to the substrate site; that span reads DGSS. Mg(2+) is bound at residue Glu278.

This sequence belongs to the FBPase class 1 family. Homotetramer. It depends on Mg(2+) as a cofactor.

The protein resides in the cytoplasm. It carries out the reaction beta-D-fructose 1,6-bisphosphate + H2O = beta-D-fructose 6-phosphate + phosphate. It functions in the pathway carbohydrate biosynthesis; Calvin cycle. The polypeptide is Fructose-1,6-bisphosphatase class 1 (Prosthecochloris aestuarii (strain DSM 271 / SK 413)).